The primary structure comprises 126 residues: Mating-type protein A1 (126 aa).

Residues 70 to 126 constitute a DNA-binding region (homeobox); sequence SPKGKSSISPQARAFLEQVFRRKQSLNSKEKEEVAKKCGITPLQVRVWFINKRMRSK.

Belongs to the MATA1 family. As to quaternary structure, binds DNA with a high specificity as a heterodimer of A1 and ALPHA2.

The protein localises to the nucleus. In terms of biological role, mating type proteins are sequence specific DNA-binding proteins that act as master switches in yeast differentiation by controlling gene expression in a cell type-specific fashion. Transcriptional corepressor that, in a/alpha diploid cells, binds cooperatively with the ALPHA2 protein to a 21-bp DNA sequence termed the haploid-specific gene (hsg) operator, to repress transcription of haploid-specific genes and of MATALPHA1. In Saccharomyces cerevisiae (Baker's yeast), this protein is Mating-type protein A1 (MATA1).